Consider the following 367-residue polypeptide: Putative F-box protein At3g21130 (367 aa).

The region spanning 4–50 (KRNTVYLSEDLIVEILSRVSAVSLARLRTTSKRWNALVKDERLAKKH) is the F-box domain.

In Arabidopsis thaliana (Mouse-ear cress), this protein is Putative F-box protein At3g21130.